A 390-amino-acid chain; its full sequence is Protein TAB2 homolog, chloroplastic (390 aa).

Residues 1–69 (MTTATAIVAG…RSISSESSTE (69 aa)) constitute a chloroplast transit peptide. The disordered stretch occupies residues 16–85 (RRSLPLPNPP…IADEEVEAEN (70 aa)). The segment covering 61 to 75 (SISSESSTEASAAAD) has biased composition (low complexity).

It is found in the plastid. The protein localises to the chloroplast. Its function is as follows. Nuclear genome-encoded factor involved in the biogenesis of photosystem I (PSI). Required for the accumulation of PSI during plant development. Does not seem to be required for the translation of mRNAs of the PSI subunits. In Zea mays (Maize), this protein is Protein TAB2 homolog, chloroplastic.